Consider the following 301-residue polypeptide: GLABROUS1 enhancer-binding protein-like 2 (301 aa).

The segment at 1–62 (MATPTELGFS…NTKMASPPSN (62 aa)) is disordered. The segment covering 44-54 (KKKKKKTKHNT) has biased composition (basic residues). A non-canonical leucine-zipper region spans residues 268–289 (LSNEWKALCVEELKLNINKLRF).

This sequence belongs to the GeBP family. Homo- and heterodimers. Interacts with GEBP, GPL1 and GPL3. In terms of tissue distribution, expressed in the apical meristem and young leaf primordia. Detected in the vascular tissues of cotyledons and leaves, in hydathodes and in the septun of siliques, but not in roots.

The protein localises to the nucleus. Its function is as follows. Probable transcription factor. May play redundant roles with GEBP and GPL1 in cytokinin responses by regulating the transcript levels of type-A ARR response genes. Involved in stress responses. Plays a repressive role in cell expansion by counteracting the positive role of CPR5 in this process, but does not regulate cell proliferation or endoreduplication. In Arabidopsis thaliana (Mouse-ear cress), this protein is GLABROUS1 enhancer-binding protein-like 2.